The chain runs to 71 residues: Permeability factor 2 (71 aa).

2 cysteine pairs are disulfide-bonded: Cys-7–Cys-33 and Cys-9–Cys-49.

This sequence belongs to the intercrine alpha (chemokine CxC) family. Homodimer.

It localises to the secreted. Its function is as follows. Has chemotactic activity for neutrophils. The chain is Permeability factor 2 from Oryctolagus cuniculus (Rabbit).